Reading from the N-terminus, the 62-residue chain is Trypsin inhibitor MCI-3 (62 aa).

It belongs to the protease inhibitor I13 (potato type I serine protease inhibitor) family.

The sequence is that of Trypsin inhibitor MCI-3 from Momordica charantia (Bitter gourd).